Reading from the N-terminus, the 465-residue chain is Putrescine aminotransferase (465 aa).

Pyridoxal 5'-phosphate contacts are provided by residues 150 to 151 (GT) and Gln-274. At Lys-300 the chain carries N6-(pyridoxal phosphate)lysine. A pyridoxal 5'-phosphate-binding site is contributed by Thr-332.

The protein belongs to the class-III pyridoxal-phosphate-dependent aminotransferase family. Putrescine aminotransferase subfamily. Pyridoxal 5'-phosphate is required as a cofactor.

It carries out the reaction an alkane-alpha,omega-diamine + 2-oxoglutarate = an omega-aminoaldehyde + L-glutamate. It catalyses the reaction putrescine + 2-oxoglutarate = 1-pyrroline + L-glutamate + H2O. The catalysed reaction is cadaverine + 2-oxoglutarate = 5-aminopentanal + L-glutamate. The protein operates within amine and polyamine degradation; putrescine degradation; 4-aminobutanal from putrescine (transaminase route): step 1/1. Catalyzes the aminotransferase reaction from putrescine to 2-oxoglutarate, leading to glutamate and 4-aminobutanal, which spontaneously cyclizes to form 1-pyrroline. This is the first step in one of two pathways for putrescine degradation, where putrescine is converted into 4-aminobutanoate (gamma-aminobutyrate or GABA) via 4-aminobutanal. Also functions as a cadaverine transaminase in a a L-lysine degradation pathway to succinate that proceeds via cadaverine, glutarate and L-2-hydroxyglutarate. The chain is Putrescine aminotransferase from Cronobacter sakazakii (strain ATCC BAA-894) (Enterobacter sakazakii).